The chain runs to 219 residues: Ribose-5-phosphate isomerase A (219 aa).

Substrate-binding positions include 28–31, 81–84, and 94–97; these read SGST, DGAD, and KGGG. Glu-103 (proton acceptor) is an active-site residue. Lys-121 provides a ligand contact to substrate.

This sequence belongs to the ribose 5-phosphate isomerase family. In terms of assembly, homodimer.

The enzyme catalyses aldehydo-D-ribose 5-phosphate = D-ribulose 5-phosphate. Its pathway is carbohydrate degradation; pentose phosphate pathway; D-ribose 5-phosphate from D-ribulose 5-phosphate (non-oxidative stage): step 1/1. In terms of biological role, catalyzes the reversible conversion of ribose-5-phosphate to ribulose 5-phosphate. This chain is Ribose-5-phosphate isomerase A, found in Actinobacillus succinogenes (strain ATCC 55618 / DSM 22257 / CCUG 43843 / 130Z).